We begin with the raw amino-acid sequence, 343 residues long: MQPPPPGPLGDCLRDWEDLQQDFQNIQETHRLYRLKLEELTKLQNNCTSSITRQKKRLQELALALKKCKPSLPAEAEGAAQELENQMKERQGLFFDMEAYLPKKNGLYLSLVLGNVNVTLLSKQAKFAYKDEYEKFKLYLTIILILISFTCRFLLNSRVTDAAFNFLLVWYYCTLTIRESILINNGSRIKGWWVFHHYVSTFLSGVMLTWPDGLMYQKFRNQFLSFSMYQSFVQFLQYYYQSGCLYRLRALGERHTMDLTVEGFQSWMWRGLTFLLPFLFFGHFWQLFNALTLFNLAQDPQCKEWQVLMCGFPFLLLFLGNFFTTLRVVHHKFHSQRHGSKKD.

The Cytoplasmic segment spans residues 1 to 132 (MQPPPPGPLG…KQAKFAYKDE (132 aa)). Lysine 130 contributes to the CoA binding site. A helical membrane pass occupies residues 133 to 152 (YEKFKLYLTIILILISFTCR). The Extracellular portion of the chain corresponds to 153–158 (FLLNSR). Residues 159-177 (VTDAAFNFLLVWYYCTLTI) traverse the membrane as a helical segment. Over 178–190 (RESILINNGSRIK) the chain is Cytoplasmic. Residues serine 187 and arginine 188 each contribute to the CoA site. Residues 191-209 (GWWVFHHYVSTFLSGVMLT) traverse the membrane as a helical segment. Residues 210 to 218 (WPDGLMYQK) lie on the Extracellular side of the membrane. Residues 219 to 240 (FRNQFLSFSMYQSFVQFLQYYY) form a helical membrane-spanning segment. Residues glutamine 237, tyrosine 240, glutamine 241, and histidine 283 each contribute to the CoA site. At 241 to 270 (QSGCLYRLRALGERHTMDLTVEGFQSWMWR) the chain is on the cytoplasmic side. The helical transmembrane segment at 271–294 (GLTFLLPFLFFGHFWQLFNALTLF) threads the bilayer. The Extracellular segment spans residues 295-304 (NLAQDPQCKE). A helical transmembrane segment spans residues 305–330 (WQVLMCGFPFLLLFLGNFFTTLRVVH). Residues 331 to 343 (HKFHSQRHGSKKD) lie on the Cytoplasmic side of the membrane. Lysine 332 contacts CoA.

This sequence belongs to the TMEM120 family. In terms of assembly, homodimer. Forms heterooligomer with TMEM120B. Interacts with PKD2; TMEM120A inhibits PKD2 channel activity through the physical association of PKD2 with TMEM120A. Interacts (via C-terminal domain) with STING1; regulates the trafficking of STING1 from the ER to the ER-Golgi intermediate compartment to elicit antiviral effects. As to expression, expressed in nociceptors.

The protein resides in the cell membrane. It is found in the nucleus inner membrane. It localises to the endoplasmic reticulum. Multifunctional protein involved in mechanosensation, and plays an essential role in lipid metabolism and adipocyte differentiation. May function as a potential ion channel involved in sensing mechanical stimuli. Mediates the mechanosensitivity of the PKD2-TMEM120A channel complex through direct physical interaction. TMEM120A seems to affect mechanosensation by inhibiting PIEZO2 channels, possibly by altering cellular lipid content. TMEM120A is structurally similar to a lipid-modifying enzyme, ELOVL7, and contains a bound coenzyme A molecule, which suggests it might function as an enzyme in lipid metabolism. Additionnaly, implicated in innate immune response against Zika virus. Acts as a key activator of the antiviral signaling involving STING1. In Homo sapiens (Human), this protein is Transmembrane protein 120A.